Here is a 1150-residue protein sequence, read N- to C-terminus: ATP-dependent helicase/deoxyribonuclease subunit B (1150 aa).

8 to 15 lines the ATP pocket; it reads GRAGSGKS. [4Fe-4S] cluster contacts are provided by Cys786, Cys1106, Cys1109, and Cys1115.

Belongs to the helicase family. AddB/RexB type 1 subfamily. Heterodimer of AddA and AddB. Requires Mg(2+) as cofactor. [4Fe-4S] cluster is required as a cofactor.

Functionally, the heterodimer acts as both an ATP-dependent DNA helicase and an ATP-dependent, dual-direction single-stranded exonuclease. Recognizes the chi site generating a DNA molecule suitable for the initiation of homologous recombination. The AddB subunit has 5' -&gt; 3' nuclease activity but not helicase activity. In Clostridium botulinum (strain Langeland / NCTC 10281 / Type F), this protein is ATP-dependent helicase/deoxyribonuclease subunit B.